We begin with the raw amino-acid sequence, 228 residues long: Biosynthetic peptidoglycan transglycosylase (228 aa).

The helical transmembrane segment at 8 to 28 threads the bilayer; it reads GVAALLALFLLYQLWIFGHIV.

The protein belongs to the glycosyltransferase 51 family.

It localises to the cell inner membrane. It carries out the reaction [GlcNAc-(1-&gt;4)-Mur2Ac(oyl-L-Ala-gamma-D-Glu-L-Lys-D-Ala-D-Ala)](n)-di-trans,octa-cis-undecaprenyl diphosphate + beta-D-GlcNAc-(1-&gt;4)-Mur2Ac(oyl-L-Ala-gamma-D-Glu-L-Lys-D-Ala-D-Ala)-di-trans,octa-cis-undecaprenyl diphosphate = [GlcNAc-(1-&gt;4)-Mur2Ac(oyl-L-Ala-gamma-D-Glu-L-Lys-D-Ala-D-Ala)](n+1)-di-trans,octa-cis-undecaprenyl diphosphate + di-trans,octa-cis-undecaprenyl diphosphate + H(+). The protein operates within cell wall biogenesis; peptidoglycan biosynthesis. Peptidoglycan polymerase that catalyzes glycan chain elongation from lipid-linked precursors. The chain is Biosynthetic peptidoglycan transglycosylase from Laribacter hongkongensis (strain HLHK9).